A 211-amino-acid chain; its full sequence is Thiamine-phosphate synthase (211 aa).

Residues 37 to 41 (QLRIK) and asparagine 69 contribute to the 4-amino-2-methyl-5-(diphosphooxymethyl)pyrimidine site. 2 residues coordinate Mg(2+): aspartate 70 and aspartate 89. Serine 108 contacts 4-amino-2-methyl-5-(diphosphooxymethyl)pyrimidine. 2-[(2R,5Z)-2-carboxy-4-methylthiazol-5(2H)-ylidene]ethyl phosphate is bound at residue 134-136 (TQT). Lysine 137 is a binding site for 4-amino-2-methyl-5-(diphosphooxymethyl)pyrimidine. 2-[(2R,5Z)-2-carboxy-4-methylthiazol-5(2H)-ylidene]ethyl phosphate contacts are provided by residues glycine 166 and 186–187 (VS).

The protein belongs to the thiamine-phosphate synthase family. Mg(2+) is required as a cofactor.

It catalyses the reaction 2-[(2R,5Z)-2-carboxy-4-methylthiazol-5(2H)-ylidene]ethyl phosphate + 4-amino-2-methyl-5-(diphosphooxymethyl)pyrimidine + 2 H(+) = thiamine phosphate + CO2 + diphosphate. The enzyme catalyses 2-(2-carboxy-4-methylthiazol-5-yl)ethyl phosphate + 4-amino-2-methyl-5-(diphosphooxymethyl)pyrimidine + 2 H(+) = thiamine phosphate + CO2 + diphosphate. It carries out the reaction 4-methyl-5-(2-phosphooxyethyl)-thiazole + 4-amino-2-methyl-5-(diphosphooxymethyl)pyrimidine + H(+) = thiamine phosphate + diphosphate. It functions in the pathway cofactor biosynthesis; thiamine diphosphate biosynthesis; thiamine phosphate from 4-amino-2-methyl-5-diphosphomethylpyrimidine and 4-methyl-5-(2-phosphoethyl)-thiazole: step 1/1. Its function is as follows. Condenses 4-methyl-5-(beta-hydroxyethyl)thiazole monophosphate (THZ-P) and 2-methyl-4-amino-5-hydroxymethyl pyrimidine pyrophosphate (HMP-PP) to form thiamine monophosphate (TMP). This Salmonella newport (strain SL254) protein is Thiamine-phosphate synthase.